Reading from the N-terminus, the 409-residue chain is U-box domain-containing protein 28 (409 aa).

Residues 10-84 form the U-box domain; it reads TVPCFFKCPI…DHWSDSINRR (75 aa). 3 ARM repeats span residues 178 to 218, 219 to 261, and 263 to 304; these read RLSN…FIAV, DAES…AIAS, and KRVK…AISS.

The enzyme catalyses S-ubiquitinyl-[E2 ubiquitin-conjugating enzyme]-L-cysteine + [acceptor protein]-L-lysine = [E2 ubiquitin-conjugating enzyme]-L-cysteine + N(6)-ubiquitinyl-[acceptor protein]-L-lysine.. It functions in the pathway protein modification; protein ubiquitination. Functions as an E3 ubiquitin ligase. The chain is U-box domain-containing protein 28 (PUB28) from Arabidopsis thaliana (Mouse-ear cress).